Here is a 144-residue protein sequence, read N- to C-terminus: Putative pre-16S rRNA nuclease (144 aa).

It belongs to the YqgF nuclease family.

The protein localises to the cytoplasm. In terms of biological role, could be a nuclease involved in processing of the 5'-end of pre-16S rRNA. This is Putative pre-16S rRNA nuclease from Wigglesworthia glossinidia brevipalpis.